The chain runs to 83 residues: Bowman-Birk type proteinase inhibitor C-II (83 aa).

The propeptide occupies 1–7 (MELNLFK). Cystine bridges form between Cys-21/Cys-75, Cys-22/Cys-37, Cys-25/Cys-71, Cys-27/Cys-35, Cys-45/Cys-52, Cys-49/Cys-64, and Cys-54/Cys-62.

Belongs to the Bowman-Birk serine protease inhibitor family.

This Glycine max (Soybean) protein is Bowman-Birk type proteinase inhibitor C-II.